The chain runs to 221 residues: Urease accessory protein UreF (221 aa).

It belongs to the UreF family. As to quaternary structure, ureD, UreF and UreG form a complex that acts as a GTP-hydrolysis-dependent molecular chaperone, activating the urease apoprotein by helping to assemble the nickel containing metallocenter of UreC. The UreE protein probably delivers the nickel.

Its subcellular location is the cytoplasm. Required for maturation of urease via the functional incorporation of the urease nickel metallocenter. This chain is Urease accessory protein UreF, found in Teredinibacter turnerae (strain ATCC 39867 / T7901).